Consider the following 417-residue polypeptide: Neuropeptide FF receptor 2 (417 aa).

Residues 1–45 (MSEKWDSNSSESWNHIWSGNDTQHHWYSDINITYVNYYLHQPQVA) are Extracellular-facing. N-linked (GlcNAc...) asparagine glycosylation is found at Asn-8, Asn-20, and Asn-31. The helical transmembrane segment at 46 to 66 (AVFISSYLLIFVLCMVGNTVV) threads the bilayer. Over 67–82 (CFIVIRNRHMHTVTNF) the chain is Cytoplasmic. Residues 83–103 (FILNLAISDLLVGIFCMPITL) traverse the membrane as a helical segment. At 104 to 119 (LDNIIAGWPFGSSMCK) the chain is on the extracellular side. A disulfide bridge connects residues Cys-118 and Cys-206. The chain crosses the membrane as a helical span at residues 120-140 (ISGLVQGISVAASVFTLVAIA). Residues 141-160 (VDRFRCVVYPFKPKLTVKTA) lie on the Cytoplasmic side of the membrane. A helical membrane pass occupies residues 161–181 (FVTIVIIWGLAIAIMTPSAIM). The Extracellular portion of the chain corresponds to 182–217 (LHVQEEKYYRVRLSSHNKTSTVYWCREDWPRHEMRR). The N-linked (GlcNAc...) asparagine glycan is linked to Asn-198. Residues 218 to 238 (IYTTVLFATIYLAPLSLIVIM) form a helical membrane-spanning segment. Residues 239–274 (YARIGASLFKTAAHCTGKQRPVQWHVSKKKQKVIKM) lie on the Cytoplasmic side of the membrane. A helical membrane pass occupies residues 275-295 (LLTVALLFILSWLPLWTLMML). At 296–310 (SDYTDLSPNKLRIIN) the chain is on the extracellular side. Residues 311 to 331 (IYIYPFAHWLAFCNSSVNPII) form a helical membrane-spanning segment. The Cytoplasmic portion of the chain corresponds to 332 to 417 (YGFFNENFRN…MGEATNSTVA (86 aa)). Residues 382-401 (SQNPGGENLGCGKSADNPTQ) form a disordered region.

It belongs to the G-protein coupled receptor 1 family.

It localises to the cell membrane. Its function is as follows. Receptor for NPAF (A-18-F-amide) and NPFF (F-8-F-amide) neuropeptides, also known as morphine-modulating peptides. Can also be activated by a variety of naturally occurring or synthetic FMRF-amide like ligands. This receptor mediates its action by association with G proteins that activate a phosphatidylinositol-calcium second messenger system. In Mus musculus (Mouse), this protein is Neuropeptide FF receptor 2 (Npffr2).